We begin with the raw amino-acid sequence, 261 residues long: Large ribosomal subunit protein uL2 (261 aa).

The tract at residues 207–233 (VEHPHGGGNHQHIGKASTVKRGTPPGR) is disordered.

The protein belongs to the universal ribosomal protein uL2 family.

It is found in the cytoplasm. This chain is Large ribosomal subunit protein uL2 (RpL8), found in Aedes albopictus (Asian tiger mosquito).